Here is a 158-residue protein sequence, read N- to C-terminus: MSEQSNTEMAFQIQRIYTKDISFEAPNAPQVFQQEWQPEVKLDLDTASSELAQGVYEVVLRVTVTAALGEETAFLCEVQQGGIFSIDGIEGTQLAHCLGAYCPNILFPYARECITSLVSRGTFPQLNLAPVNFDALFMNYLQQQAEQSQGGEQTEQEA.

Belongs to the SecB family. Homotetramer, a dimer of dimers. One homotetramer interacts with 1 SecA dimer.

It is found in the cytoplasm. One of the proteins required for the normal export of preproteins out of the cell cytoplasm. It is a molecular chaperone that binds to a subset of precursor proteins, maintaining them in a translocation-competent state. It also specifically binds to its receptor SecA. The chain is Protein-export protein SecB from Photorhabdus laumondii subsp. laumondii (strain DSM 15139 / CIP 105565 / TT01) (Photorhabdus luminescens subsp. laumondii).